The following is a 578-amino-acid chain: Dystrotelin (578 aa).

Residues T223–S279 form a ZZ-type zinc finger. C228, C231, C243, C246, C252, C255, H265, and H269 together coordinate Zn(2+). Positions H322–I351 form a coiled coil. The interval R382 to K475 is disordered. 2 stretches are compositionally biased toward basic and acidic residues: residues K399–K410 and P431–R451. A compositionally biased stretch (polar residues) spans S455–M472. Positions A503 to A537 form a coiled coil.

Its subcellular location is the cell membrane. In Homo sapiens (Human), this protein is Dystrotelin (DYTN).